We begin with the raw amino-acid sequence, 414 residues long: Snake venom metalloproteinase atrolysin-D (414 aa).

The N-terminal stretch at 1–20 is a signal peptide; that stretch reads MIEVLLVTICLAVFPYQGSS. The propeptide occupies 21-190; the sequence is IILESGNVND…KASDLNLNPD (170 aa). Glutamine 191 bears the Pyrrolidone carboxylic acid mark. Residues 197–393 enclose the Peptidase M12B domain; sequence RYIELVVVAD…YKPQCILNKP (197 aa). Residues glutamate 200 and aspartate 284 each contribute to the Ca(2+) site. 2 disulfides stabilise this stretch: cysteine 308–cysteine 388 and cysteine 348–cysteine 355. Zn(2+) is bound at residue histidine 333. The active site involves glutamate 334. Histidine 337 and histidine 343 together coordinate Zn(2+). Residues cysteine 388 and asparagine 391 each contribute to the Ca(2+) site. Residues 394-414 constitute a propeptide that is removed on maturation; the sequence is LRIDPVSTPVSGNELLEAGEE.

The protein belongs to the venom metalloproteinase (M12B) family. P-I subfamily. As to quaternary structure, monomer. Zn(2+) is required as a cofactor. In terms of processing, the N-terminus is blocked. As to expression, expressed by the venom gland.

Its subcellular location is the secreted. It carries out the reaction Cleavage of 5-His-|-Leu-6, 10-His-|-Leu-11, 14-Ala-|-Leu-15, 16-Tyr-|-Leu-17 and 23-Gly-|-Phe-24 of insulin B chain. With small molecule substrates prefers hydrophobic residue at P2' and small residue such as Ala, Gly at P1.. Its function is as follows. Snake venom zinc metalloproteinase that causes hemorrhage by provoking the degradation of the sub-endothelial matrix proteins (fibronectin, laminin, type IV collagen, nidogen, and gelatins). This is Snake venom metalloproteinase atrolysin-D from Crotalus atrox (Western diamondback rattlesnake).